The following is a 755-amino-acid chain: Xaa-Pro dipeptidyl-peptidase (755 aa).

Catalysis depends on charge relay system residues serine 348, aspartate 468, and histidine 498.

This sequence belongs to the peptidase S15 family. In terms of assembly, homodimer.

It is found in the cytoplasm. The enzyme catalyses Hydrolyzes Xaa-Pro-|- bonds to release unblocked, N-terminal dipeptides from substrates including Ala-Pro-|-p-nitroanilide and (sequentially) Tyr-Pro-|-Phe-Pro-|-Gly-Pro-|-Ile.. Its function is as follows. Removes N-terminal dipeptides sequentially from polypeptides having unsubstituted N-termini provided that the penultimate residue is proline. The polypeptide is Xaa-Pro dipeptidyl-peptidase (Streptococcus thermophilus).